The following is a 382-amino-acid chain: Transforming growth factor beta-1 proprotein (382 aa).

The first 21 residues, 1–21 (MEVLWMLLVLLVLHLSSLAMS), serve as a signal peptide directing secretion. Residues 22–65 (LSTCKAVDMEEVRKRRIEAIRGQILSKLKLDKTPDVDSEKMTVP) form a straightjacket domain region. The arm domain stretch occupies residues 66–263 (SEAIFLYNST…SMPAERIDTV (198 aa)). Asn73, Asn123, and Asn166 each carry an N-linked (GlcNAc...) asparagine glycan. The bowtie tail stretch occupies residues 218–242 (PTPQAKDIDIEGFPALRGDLASLSS). The short motif at 234 to 236 (RGD) is the Cell attachment site element. Intrachain disulfides connect Cys277–Cys286, Cys285–Cys348, Cys314–Cys379, and Cys318–Cys381.

Belongs to the TGF-beta family. As to quaternary structure, latency-associated peptide: Homodimer; disulfide-linked. Latency-associated peptide: Interacts with Transforming growth factor beta-1 (TGF-beta-1) chain; interaction is non-covalent and maintains (TGF-beta-1) in a latent state; each Latency-associated peptide (LAP) monomer interacts with TGF-beta-1 in the other monomer. Transforming growth factor beta-1: Homodimer; disulfide-linked. Transforming growth factor beta-1: Interacts with TGF-beta receptors (tgfbr1 and tgfbr2), leading to signal transduction. Transforming growth factor beta-1 proprotein: The precursor proprotein is cleaved in the Golgi apparatus to form Transforming growth factor beta-1 (TGF-beta-1) and Latency-associated peptide (LAP) chains, which remain non-covalently linked, rendering TGF-beta-1 inactive.

It is found in the secreted. The protein localises to the extracellular space. It localises to the extracellular matrix. Its function is as follows. Transforming growth factor beta-1 proprotein: Precursor of the Latency-associated peptide (LAP) and Transforming growth factor beta-1 (TGF-beta-1) chains, which constitute the regulatory and active subunit of TGF-beta-1, respectively. Required to maintain the Transforming growth factor beta-1 (TGF-beta-1) chain in a latent state during storage in extracellular matrix. Associates non-covalently with TGF-beta-1 and regulates its activation via interaction with 'milieu molecules', such as LTBP1, LRRC32/GARP and LRRC33/NRROS, that control activation of TGF-beta-1. Interaction with integrins (ITGAV:ITGB6 or ITGAV:ITGB8) results in distortion of the Latency-associated peptide chain and subsequent release of the active TGF-beta-1. Functionally, transforming growth factor beta-1: Multifunctional protein that regulates the growth and differentiation of various cell types and is involved in various processes, such as normal development, immune function, microglia function and responses to neurodegeneration. Activation into mature form follows different steps: following cleavage of the proprotein in the Golgi apparatus, Latency-associated peptide (LAP) and Transforming growth factor beta-1 (TGF-beta-1) chains remain non-covalently linked rendering TGF-beta-1 inactive during storage in extracellular matrix. At the same time, LAP chain interacts with 'milieu molecules', such as ltbp1, lrrc32/garp and lrrc33/nrros that control activation of TGF-beta-1 and maintain it in a latent state during storage in extracellular milieus. TGF-beta-1 is released from LAP by integrins (ITGAV:ITGB6 or ITGAV:ITGB8): integrin-binding to LAP stabilizes an alternative conformation of the LAP bowtie tail and results in distortion of the LAP chain and subsequent release of the active TGF-beta-1. Once activated following release of LAP, TGF-beta-1 acts by binding to TGF-beta receptors (tgfbr1 and tgfbr2), which transduce signal. While expressed by many cells types, TGF-beta-1 only has a very localized range of action within cell environment thanks to fine regulation of its activation by Latency-associated peptide chain (LAP) and 'milieu molecules'. Plays an important role in bone remodeling: acts as a potent stimulator of osteoblastic bone formation. Can promote either T-helper 17 cells (Th17) or regulatory T-cells (Treg) lineage differentiation in a concentration-dependent manner. Can induce epithelial-to-mesenchymal transition (EMT) and cell migration in various cell types. In Xenopus laevis (African clawed frog), this protein is Transforming growth factor beta-1 proprotein (tgfb1).